Reading from the N-terminus, the 670-residue chain is Lebercilin-like protein (670 aa).

The interval 24-44 (RRSAECKRSPGTGDFSRNSNA) is disordered. Coiled-coil stretches lie at residues 148–259 (LHKI…EREE) and 305–336 (AAQTATKTLQVEVKHLQQKLKEKDRELEIKNI). Residues 351–402 (YPKVSSTKSVQADRKSLPFTSMRHQGTQKSDVAPLTTKGKKATGNMDRKEKS) form a disordered region. Residues 368–380 (PFTSMRHQGTQKS) show a composition bias toward polar residues. The stretch at 420–440 (EDSKTKYEDLSREEKHLEVQV) forms a coiled coil. Disordered stretches follow at residues 495–520 (RSMQRNGMDDTPDKCTAPYTKGPLRQ), 533–594 (LHHG…FRDK), and 606–647 (GYVL…AFGD). The segment covering 546–558 (AGNTKYSHSTSKH) has biased composition (polar residues). Basic and acidic residues-rich tracts occupy residues 560-572 (SNREEMELEHSDS), 585-594 (KAKDTTFRDK), and 621-632 (GSEEPLQSKESH). The segment covering 637–647 (SQASASNAFGD) has biased composition (polar residues).

Belongs to the LCA5 family.

The protein is Lebercilin-like protein of Papio anubis (Olive baboon).